A 156-amino-acid chain; its full sequence is Small ribosomal subunit protein uS7 (156 aa).

The protein belongs to the universal ribosomal protein uS7 family. In terms of assembly, part of the 30S ribosomal subunit. Contacts proteins S9 and S11.

In terms of biological role, one of the primary rRNA binding proteins, it binds directly to 16S rRNA where it nucleates assembly of the head domain of the 30S subunit. Is located at the subunit interface close to the decoding center, probably blocks exit of the E-site tRNA. The chain is Small ribosomal subunit protein uS7 from Xanthobacter autotrophicus (strain ATCC BAA-1158 / Py2).